The sequence spans 128 residues: Large ribosomal subunit protein eL22 (128 aa).

This sequence belongs to the eukaryotic ribosomal protein eL22 family. Component of the large ribosomal subunit.

The protein resides in the cytoplasm. Its function is as follows. Component of the large ribosomal subunit. The ribosome is a large ribonucleoprotein complex responsible for the synthesis of proteins in the cell. The polypeptide is Large ribosomal subunit protein eL22 (rpl22) (Xenopus tropicalis (Western clawed frog)).